The following is a 184-amino-acid chain: MNIPPEKMHNLEIKKHSRVDLLLLRSSDFHSFRKLQRDVDEMGLLSSTEQHLSGILTTLDNITDQDNTLYCLTQEGELIGMLKIGTKRLYLYNGKDLHCRSCACLLDFYIQRNFRKRGLGLELFNFMLKDKAISPSRLCYDNPSYKLQSFLKKHFSPCALIKQPNNFVIFAEYFGEPEMGPFGQ.

An N-acetyltransferase domain is found at 1 to 174 (MNIPPEKMHN…NNFVIFAEYF (174 aa)). Acetyl-CoA is bound by residues 108-121 (FYIQ…GLGL) and 144-153 (SYKLQSFLKK).

This sequence belongs to the acetyltransferase ATAT1 family.

The enzyme catalyses L-lysyl-[alpha-tubulin] + acetyl-CoA = N(6)-acetyl-L-lysyl-[alpha-tubulin] + CoA + H(+). Specifically acetylates 'Lys-40' in alpha-tubulin on the lumenal side of microtubules. Promotes microtubule destabilization and accelerates microtubule dynamics; this activity may be independent of acetylation activity. Acetylates alpha-tubulin with a slow enzymatic rate, due to a catalytic site that is not optimized for acetyl transfer. Enters the microtubule through each end and diffuses quickly throughout the lumen of microtubules. Acetylates only long/old microtubules because of its slow acetylation rate since it does not have time to act on dynamically unstable microtubules before the enzyme is released. The chain is Alpha-tubulin N-acetyltransferase from Plasmodium knowlesi (strain H).